The primary structure comprises 196 residues: Translation machinery-associated protein 22 (196 aa).

The SUI1 domain occupies Val-97–Leu-168.

It belongs to the DENR family. Interacts with the 40S ribosomal subunit.

It localises to the cytoplasm. This Candida glabrata (strain ATCC 2001 / BCRC 20586 / JCM 3761 / NBRC 0622 / NRRL Y-65 / CBS 138) (Yeast) protein is Translation machinery-associated protein 22 (TMA22).